Reading from the N-terminus, the 157-residue chain is 6,7-dimethyl-8-ribityllumazine synthase 1 (157 aa).

5-amino-6-(D-ribitylamino)uracil contacts are provided by residues Phe22, 53–55 (ALE), and 82–84 (TVI). 87-88 (ET) is a binding site for (2S)-2-hydroxy-3-oxobutyl phosphate. His90 (proton donor) is an active-site residue. Asn115 contributes to the 5-amino-6-(D-ribitylamino)uracil binding site. His129 contributes to the (2S)-2-hydroxy-3-oxobutyl phosphate binding site.

This sequence belongs to the DMRL synthase family. In terms of assembly, homopentamer.

The catalysed reaction is (2S)-2-hydroxy-3-oxobutyl phosphate + 5-amino-6-(D-ribitylamino)uracil = 6,7-dimethyl-8-(1-D-ribityl)lumazine + phosphate + 2 H2O + H(+). It functions in the pathway cofactor biosynthesis; riboflavin biosynthesis; riboflavin from 2-hydroxy-3-oxobutyl phosphate and 5-amino-6-(D-ribitylamino)uracil: step 1/2. In terms of biological role, catalyzes the formation of 6,7-dimethyl-8-ribityllumazine by condensation of 5-amino-6-(D-ribitylamino)uracil with 3,4-dihydroxy-2-butanone 4-phosphate. This is the penultimate step in the biosynthesis of riboflavin. This Brucella abortus (strain 2308) protein is 6,7-dimethyl-8-ribityllumazine synthase 1 (ribH1).